The sequence spans 525 residues: GMP synthase [glutamine-hydrolyzing] (525 aa).

A Glutamine amidotransferase type-1 domain is found at 9–207 (RILILDFGSQ…VLGICGCEAL (199 aa)). Cysteine 86 serves as the catalytic Nucleophile. Active-site residues include histidine 181 and glutamate 183. In terms of domain architecture, GMPS ATP-PPase spans 208–400 (WTSATIIEDA…LGLPYDMLYR (193 aa)). 235-241 (SGGVDSS) provides a ligand contact to ATP.

Homodimer.

The catalysed reaction is XMP + L-glutamine + ATP + H2O = GMP + L-glutamate + AMP + diphosphate + 2 H(+). The protein operates within purine metabolism; GMP biosynthesis; GMP from XMP (L-Gln route): step 1/1. In terms of biological role, catalyzes the synthesis of GMP from XMP. This is GMP synthase [glutamine-hydrolyzing] from Yersinia pestis bv. Antiqua (strain Antiqua).